The chain runs to 400 residues: Tryptophan synthase beta chain (400 aa).

An N6-(pyridoxal phosphate)lysine modification is found at Lys-92.

Belongs to the TrpB family. Tetramer of two alpha and two beta chains. Pyridoxal 5'-phosphate serves as cofactor.

The catalysed reaction is (1S,2R)-1-C-(indol-3-yl)glycerol 3-phosphate + L-serine = D-glyceraldehyde 3-phosphate + L-tryptophan + H2O. Its pathway is amino-acid biosynthesis; L-tryptophan biosynthesis; L-tryptophan from chorismate: step 5/5. Functionally, the beta subunit is responsible for the synthesis of L-tryptophan from indole and L-serine. This Neisseria meningitidis serogroup C (strain 053442) protein is Tryptophan synthase beta chain.